Reading from the N-terminus, the 203-residue chain is MVSAWFVVGSPVMDSSSSPCLCLDAHTTGTIRRKKILGKARNLELGSSFTGSRIVFRLSPKRVSRIANRKSKKLLIVNEDVAGNYDDTFGDVQKQIVNYFTYKAVRTVLHQLYEMNPPQYTWFYNHIITNRPTDGKRFLRALGKESQELAERVMITRLHLYGKWIKKCDHGKIYQEISDENLALMRERLMETVIWPSDDTNSR.

The transit peptide at 1–78 (MVSAWFVVGS…RKSKKLLIVN (78 aa)) directs the protein to the chloroplast.

Belongs to the RbcX family. As to quaternary structure, homodimer. Interacts with rbcL, atpB and RBCS-1B.

The protein resides in the plastid. It is found in the chloroplast stroma. Its function is as follows. Chaperone involved in RuBisCO assembly process. The protein is Chaperonin-like RbcX protein 2, chloroplastic of Arabidopsis thaliana (Mouse-ear cress).